Reading from the N-terminus, the 208-residue chain is MKTRIKICGLTREEDVDAAVAAGADAIGFVFYPPSPRYVSPQRAAELVKRIPPFVDVVGLFVNEAPEVVRIACEALPINVLQFHGDEDAAYCSQFARPYLRAARVRPGLDLVEFAGSFPDARGLLLDAFVEGYGGGGHVFDWTLIPPNLPSYLVLSGGLTADNVGDAVRRVRPVAVDISSGVEASKGIKDHSKIAAFVAAVRKADESI.

The protein belongs to the TrpF family.

The catalysed reaction is N-(5-phospho-beta-D-ribosyl)anthranilate = 1-(2-carboxyphenylamino)-1-deoxy-D-ribulose 5-phosphate. The protein operates within amino-acid biosynthesis; L-tryptophan biosynthesis; L-tryptophan from chorismate: step 3/5. The chain is N-(5'-phosphoribosyl)anthranilate isomerase from Dechloromonas aromatica (strain RCB).